The chain runs to 446 residues: Tubulin beta-4 chain (446 aa).

GTP contacts are provided by Gln11, Glu69, Ser138, Gly142, Thr143, Gly144, Asn204, and Asn226. A Mg(2+)-binding site is contributed by Glu69. Residues Asp417–Gln426 are compositionally biased toward polar residues. Positions Asp417–Glu446 are disordered. The segment covering Thr429 to Glu446 has biased composition (acidic residues).

The protein belongs to the tubulin family. In terms of assembly, dimer of alpha and beta chains. A typical microtubule is a hollow water-filled tube with an outer diameter of 25 nm and an inner diameter of 15 nM. Alpha-beta heterodimers associate head-to-tail to form protofilaments running lengthwise along the microtubule wall with the beta-tubulin subunit facing the microtubule plus end conferring a structural polarity. Microtubules usually have 13 protofilaments but different protofilament numbers can be found in some organisms and specialized cells. Mg(2+) serves as cofactor.

Its subcellular location is the cytoplasm. The protein resides in the cytoskeleton. Its function is as follows. Tubulin is the major constituent of microtubules, a cylinder consisting of laterally associated linear protofilaments composed of alpha- and beta-tubulin heterodimers. Microtubules grow by the addition of GTP-tubulin dimers to the microtubule end, where a stabilizing cap forms. Below the cap, tubulin dimers are in GDP-bound state, owing to GTPase activity of alpha-tubulin. The sequence is that of Tubulin beta-4 chain (TUBB4) from Eleusine indica (Goosegrass).